Consider the following 605-residue polypeptide: DNA mismatch repair protein MutL (605 aa).

This sequence belongs to the DNA mismatch repair MutL/HexB family.

This protein is involved in the repair of mismatches in DNA. It is required for dam-dependent methyl-directed DNA mismatch repair. May act as a 'molecular matchmaker', a protein that promotes the formation of a stable complex between two or more DNA-binding proteins in an ATP-dependent manner without itself being part of a final effector complex. This chain is DNA mismatch repair protein MutL, found in Exiguobacterium sp. (strain ATCC BAA-1283 / AT1b).